The following is a 388-amino-acid chain: Isocitrate dehydrogenase [NAD] subunit 1, mitochondrial (388 aa).

The transit peptide at 1–35 (MFSLRTAQPAQSLFRAATNTYSTSLPRSAIAARSF) directs the protein to the mitochondrion. Residues Arg-137, Arg-168, and Asp-255 each coordinate substrate. Asp-255 lines the Mg(2+) pocket.

The protein belongs to the isocitrate and isopropylmalate dehydrogenases family. Octamer of two non-identical subunits IDH1 and IDH2. It depends on Mg(2+) as a cofactor. Mn(2+) serves as cofactor.

The protein localises to the mitochondrion. The enzyme catalyses D-threo-isocitrate + NAD(+) = 2-oxoglutarate + CO2 + NADH. In terms of biological role, performs an essential role in the oxidative function of the citric acid cycle. The chain is Isocitrate dehydrogenase [NAD] subunit 1, mitochondrial (IDH1) from Ajellomyces capsulatus (Darling's disease fungus).